Here is a 523-residue protein sequence, read N- to C-terminus: NEDD8-activating enzyme E1 regulatory subunit AXL (523 aa).

Belongs to the ubiquitin-activating E1 family. ULA1 subfamily. As to quaternary structure, heterodimer of ECR1 and AXL1. The complex binds to RUB1/NEDD8 and RCE1.

It localises to the nucleus. It functions in the pathway protein modification; protein neddylation. Its function is as follows. Regulatory subunit of the dimeric ECR1-AXL1 E1 enzyme. E1 activates RUB1/NEDD8 by first adenylating its C-terminal glycine residue with ATP, thereafter linking this residue to the side chain of the catalytic cysteine, yielding a RUB1-ECR1 thioester and free AMP. E1 finally transfers RUB1 to the catalytic cysteine of RCE1. May function redundantly with AXR1 in the RUB conjugating pathway. Seems not to be functionally equivalent to AXR1 in vivo. The chain is NEDD8-activating enzyme E1 regulatory subunit AXL from Arabidopsis thaliana (Mouse-ear cress).